The chain runs to 862 residues: Active breakpoint cluster region-related protein (862 aa).

The disordered stretch occupies residues 29–84; that stretch reads YDAEGNEEHKNSREGSETMPYIDESPTMSPQLSARSQDSVDGVSPTPTEVLLPGGE. The span at 34 to 44 shows a compositional bias: basic and acidic residues; it reads NEEHKNSREGS. Residues 54-67 are compositionally biased toward polar residues; sequence PTMSPQLSARSQDS. Residues 93–286 enclose the DH domain; sequence MRKLVLSGVL…QNFLSSINED (194 aa). The PH domain occupies 303 to 462; it reads QLVKDGFLVE…WREAIQKLQK (160 aa). One can recognise a C2 domain in the interval 488-616; that stretch reads VHNVPIISHK…QSKNWHDDVI (129 aa). The 199-residue stretch at 650 to 848 folds into the Rho-GAP domain; that stretch reads VKISVVTKRE…YYLQHPPISF (199 aa).

It is found in the cell projection. It localises to the dendritic spine. The protein localises to the axon. The protein resides in the synapse. In terms of biological role, protein with a unique structure having two opposing regulatory activities toward small GTP-binding proteins. The C-terminus is a GTPase-activating protein domain which stimulates GTP hydrolysis by RAC1, RAC2 and CDC42. Accelerates the intrinsic rate of GTP hydrolysis of RAC1 or CDC42, leading to down-regulation of the active GTP-bound form. The central Dbl homology (DH) domain functions as guanine nucleotide exchange factor (GEF) that modulates the GTPases CDC42, RHOA and RAC1. Promotes the conversion of CDC42, RHOA and RAC1 from the GDP-bound to the GTP-bound form. In Xenopus laevis (African clawed frog), this protein is Active breakpoint cluster region-related protein (abr).